The primary structure comprises 91 residues: MVKNSFISVISQEEEKEENRGSIEFQVFRFTNKIRRLTSHLELHRKDYLSQRGLRKILGKRQRLLSYLSKKNRIRYKELISQLDIRESKTR.

The protein belongs to the universal ribosomal protein uS15 family. In terms of assembly, part of the 30S ribosomal subunit.

The protein resides in the plastid. It localises to the chloroplast. This Eucalyptus globulus subsp. globulus (Tasmanian blue gum) protein is Small ribosomal subunit protein uS15c (rps15).